A 960-amino-acid chain; its full sequence is Mast/stem cell growth factor receptor Kit (960 aa).

Positions 1–24 are cleaved as a signal peptide; the sequence is MEGAHLAWELAHAVLLLSLIPAGG. Over 25–511 the chain is Extracellular; that stretch reads SVPHEESSLV…IRTHTLFTPL (487 aa). 5 consecutive Ig-like C2-type domains span residues 27–102, 111–194, 201–294, 303–396, and 399–497; these read PHEE…VFVK, DSLI…LNVR, PVIT…LKAL, ATMN…VYVK, and PEIL…FNFA. 4 disulfides stabilise this stretch: cysteine 45/cysteine 87, cysteine 126/cysteine 175, cysteine 141/cysteine 172, and cysteine 222/cysteine 276. 12 N-linked (GlcNAc...) asparagine glycosylation sites follow: asparagine 76, asparagine 135, asparagine 149, asparagine 269, asparagine 286, asparagine 306, asparagine 318, asparagine 338, asparagine 343, asparagine 356, asparagine 453, and asparagine 469. A disulfide bridge connects residues cysteine 414 and cysteine 481. A helical membrane pass occupies residues 512–532; that stretch reads LIAFGVAAGLMCIIVMILVYI. Over 533-960 the chain is Cytoplasmic; the sequence is YLQKPKYEVQ…TQPLLVREDV (428 aa). Tyrosine 554 contributes to the Mg(2+) binding site. 2 positions are modified to phosphotyrosine; by autocatalysis: tyrosine 554 and tyrosine 556. The Protein kinase domain occupies 575 to 913; that stretch reads LSFGKTLGAG…QIVQLIEQQL (339 aa). ATP is bound by residues 582–589, lysine 609, and 657–663; these read GAGAFGKV and EYCCYGD. Residues tyrosine 689 and tyrosine 706 each carry the phosphotyrosine; by autocatalysis modification. The active-site Proton acceptor is aspartate 777. Arginine 781 serves as a coordination point for ATP. Mg(2+) is bound by residues asparagine 782 and aspartate 795. A phosphotyrosine; by autocatalysis mark is found at tyrosine 808 and tyrosine 921.

It belongs to the protein kinase superfamily. Tyr protein kinase family. CSF-1/PDGF receptor subfamily. Ubiquitinated. KIT is rapidly ubiquitinated after autophosphorylation induced by KITLG/SCF binding, leading to internalization and degradation. Post-translationally, autophosphorylated on tyrosine residues. KITLG/SCF binding promotes autophosphorylation. Phosphorylated tyrosine residues are important for interaction with specific binding partners. In terms of tissue distribution, high in the brain and testes and also present in the bursa of Fabricus, heart, kidney, lung, spleen thymus and ovary.

It localises to the cell membrane. The catalysed reaction is L-tyrosyl-[protein] + ATP = O-phospho-L-tyrosyl-[protein] + ADP + H(+). Functionally, tyrosine-protein kinase that acts as a cell-surface receptor for the cytokine KITLG/SCF and plays an essential role in the regulation of cell survival and proliferation, hematopoiesis, stem cell maintenance, gametogenesis, mast cell development, migration and function, and in melanogenesis. In response to KITLG/SCF binding, KIT can activate several signaling pathways. Promotes phosphorylation of PIK3R1, the regulatory subunit of phosphatidylinositol 3-kinase, and subsequent activation of the kinase AKT1. Activated KIT also transmits signals via GRB2 and activation of RAS, RAF1 and the MAP kinases MAPK1/ERK2 and/or MAPK3/ERK1. Promotes activation of STAT family members STAT1, STAT3, STAT5A and STAT5B. KIT promotes activation of PLCG1, leading to the production of the cellular signaling molecules diacylglycerol and inositol 1,4,5-trisphosphate. KIT signaling is modulated by protein phosphatases, and by rapid internalization and degradation of the receptor. The protein is Mast/stem cell growth factor receptor Kit (KIT) of Gallus gallus (Chicken).